We begin with the raw amino-acid sequence, 324 residues long: Antihemorrhagic factor jMSF (324 aa).

The N-terminal stretch at 1–19 is a signal peptide; it reads MHFLVALVLLGQIIGSTLS. Cystatin fetuin-A-type domains lie at 22–130 and 141–254; these read VRGD…VKCH and RNCP…SDCV. The short motif at 23 to 25 is the Cell attachment site element; that stretch reads RGD. Cystine bridges form between Cys28-Cys315, Cys85-Cys96, Cys110-Cys129, Cys143-Cys146, Cys205-Cys217, Cys230-Cys253, and Cys287-Cys291. Asn204 is a glycosylation site (N-linked (GlcNAc...) asparagine). Asn282 carries N-linked (GlcNAc...) asparagine glycosylation.

Homodimer. In terms of tissue distribution, expressed by the liver.

The protein resides in the secreted. Suppress hemorrhage induced by metalloproteinases from the same venom (brevilysin-H3, -H4, -H6) and from habu venom (weak inhibition of the metalloproteinases HR2A). The non-hemorrhagic brevilysin-H2 is strongly inhibited by jMSF, whereas the brevilysin-L6 is not inhibited. Does not inhibit serine and cysteine proteases such as trypsin, chymotrypsin, thermolysin, and papain. The inhibition may occur by formation of a non-covalent complex between this protein and the proteinases at their metalloproteinase domains. The chain is Antihemorrhagic factor jMSF from Gloydius blomhoffii (Mamushi).